The following is a 509-amino-acid chain: DNA nucleotidylexotransferase (509 aa).

The disordered stretch occupies residues 1-24; it reads MDPPRASHLSPRKKRPRQTGALMA. A Nuclear localization signal motif is present at residues 11-17; it reads PRKKRPR. The BRCT domain maps to 27–124; the sequence is PQDIKFQDLV…KPVEMTGKHQ (98 aa). Residue Ser134 is modified to Phosphoserine. The tract at residues 151–509 is mediates interaction with DNTTIP2; that stretch reads SQYACQRRTT…DYIEPWERNA (359 aa). An involved in DNA binding region spans residues 258 to 262; it reads VGLKT. A 2'-deoxyribonucleoside 5'-triphosphate contacts are provided by residues 333–338 and 342–345; these read GFRRGK and HDVD. Residues Asp343, Asp345, and Asp433 each coordinate Mg(2+). 448 to 449 provides a ligand contact to a 2'-deoxyribonucleoside 5'-triphosphate; sequence GW.

This sequence belongs to the DNA polymerase type-X family. Interacts with PRP19 and DNTTIP1. Forms a ternary complex with DNTTIP2 and core histone. Released from this complex by PCNA. Interacts with TRERF1. The cofactor is Mg(2+).

It is found in the nucleus. The catalysed reaction is DNA(n) + a 2'-deoxyribonucleoside 5'-triphosphate = DNA(n+1) + diphosphate. In terms of biological role, template-independent DNA polymerase which catalyzes the random addition of deoxynucleoside 5'-triphosphate to the 3'-end of a DNA initiator. One of the in vivo functions of this enzyme is the addition of nucleotides at the junction (N region) of rearranged Ig heavy chain and T-cell receptor gene segments during the maturation of B- and T-cells. The polypeptide is DNA nucleotidylexotransferase (DNTT) (Homo sapiens (Human)).